An 876-amino-acid polypeptide reads, in one-letter code: Alanine--tRNA ligase (876 aa).

Zn(2+)-binding residues include histidine 564, histidine 568, cysteine 666, and histidine 670.

This sequence belongs to the class-II aminoacyl-tRNA synthetase family. The cofactor is Zn(2+).

It localises to the cytoplasm. It catalyses the reaction tRNA(Ala) + L-alanine + ATP = L-alanyl-tRNA(Ala) + AMP + diphosphate. Its function is as follows. Catalyzes the attachment of alanine to tRNA(Ala) in a two-step reaction: alanine is first activated by ATP to form Ala-AMP and then transferred to the acceptor end of tRNA(Ala). Also edits incorrectly charged Ser-tRNA(Ala) and Gly-tRNA(Ala) via its editing domain. The polypeptide is Alanine--tRNA ligase (Colwellia psychrerythraea (strain 34H / ATCC BAA-681) (Vibrio psychroerythus)).